A 125-amino-acid chain; its full sequence is Ly6/PLAUR domain-containing protein 2 (125 aa).

A signal peptide spans methionine 1–alanine 22. The UPAR/Ly6 domain maps to cysteine 25–asparagine 100. Asparagine 46 carries an N-linked (GlcNAc...) asparagine glycan. Glycine 103 carries the GPI-anchor amidated glycine lipid modification. A propeptide spans alanine 104 to leucine 125 (removed in mature form).

It localises to the cell membrane. The protein is Ly6/PLAUR domain-containing protein 2 (LYPD2) of Homo sapiens (Human).